We begin with the raw amino-acid sequence, 142 residues long: Large ribosomal subunit protein uL13 (142 aa).

Belongs to the universal ribosomal protein uL13 family. Part of the 50S ribosomal subunit.

In terms of biological role, this protein is one of the early assembly proteins of the 50S ribosomal subunit, although it is not seen to bind rRNA by itself. It is important during the early stages of 50S assembly. The polypeptide is Large ribosomal subunit protein uL13 (Pectobacterium carotovorum subsp. carotovorum (strain PC1)).